A 74-amino-acid chain; its full sequence is MGQRLSCGCFRTDQLVTHSGEVVSLNADTFEEFSMEEFDIPPPPPLPKPVFKQPGPYKIPARSQRCPSKRRDPY.

G2 carries the N-myristoyl glycine; by host lipid modification. Positions 15–16 (LV) match the Di-leucine-like internalization motif motif. The segment at 34 to 40 (SMEEFDI) is asp/Glu-rich (acidic). Residues 36-74 (EEFDIPPPPPLPKPVFKQPGPYKIPARSQRCPSKRRDPY) are disordered.

The protein belongs to the herpesviridae cytoplasmic envelopment protein 3 family. Interacts with cytoplasmic envelopment protein 2; this interaction is essential for the proper localization of each protein to the assembly complex and thus for the production of infectious virus. Myristoylation and palmitoylation (probably on one or more of the nearby cysteines at the N-terminus) enable membrane-binding and Golgi apparatus-specific targeting and are essential for efficient packaging. In terms of processing, phosphorylated. Phosphorylation does not seem to be required for recycling to the host Golgi apparatus. Packaging is selective for underphosphorylated forms.

It localises to the virion tegument. The protein localises to the virion membrane. It is found in the host cell membrane. The protein resides in the host Golgi apparatus membrane. Functionally, plays an important role in the cytoplasmic envelopment of tegument proteins and capsids during the assembly and egress processes. Also participates in viral entry at the fusion step probably by regulating the core fusion machinery. In Equine herpesvirus 1 (strain Ab4p) (EHV-1), this protein is Cytoplasmic envelopment protein 3.